Reading from the N-terminus, the 156-residue chain is Cytochrome c-type biogenesis protein CcmE (156 aa).

At 1 to 16 (MNATKAPGGIKPKHQR) the chain is on the cytoplasmic side. A helical; Signal-anchor for type II membrane protein transmembrane segment spans residues 17–37 (LVLLVIALVALIGAGLLAAYA). Over 38 to 156 (LSNQASYFYV…QAEAVVAETK (119 aa)) the chain is Periplasmic. Residues histidine 131 and tyrosine 135 each contribute to the heme site.

Belongs to the CcmE/CycJ family.

The protein localises to the cell inner membrane. In terms of biological role, heme chaperone required for the biogenesis of c-type cytochromes. Transiently binds heme delivered by CcmC and transfers the heme to apo-cytochromes in a process facilitated by CcmF and CcmH. The sequence is that of Cytochrome c-type biogenesis protein CcmE from Novosphingobium aromaticivorans (strain ATCC 700278 / DSM 12444 / CCUG 56034 / CIP 105152 / NBRC 16084 / F199).